The sequence spans 102 residues: Small ribosomal subunit protein uS10 (102 aa).

It belongs to the universal ribosomal protein uS10 family. Part of the 30S ribosomal subunit.

In terms of biological role, involved in the binding of tRNA to the ribosomes. This Bacillus cereus (strain ATCC 10987 / NRS 248) protein is Small ribosomal subunit protein uS10.